A 437-amino-acid polypeptide reads, in one-letter code: F-box only protein 9 (437 aa).

Residues 1-26 (MSAEAEEDCHSDADRVGDEGNESPAE) are disordered. Ser2 carries the N-acetylalanine modification. Residues 8 to 26 (DCHSDADRVGDEGNESPAE) show a composition bias toward basic and acidic residues. The residue at position 10 (His10) is a Phosphoserine. The TPR repeat unit spans residues 84–117 (ARELFLQAVEEEQNGALYEAIKFYRRAMQLVPDI). At Ser126 the chain carries Phosphoserine. The F-box domain occupies 175–226 (QTHISVLPMEVLMYIFRWVVSSDLDLRSLEQLSLVCRGFYICARDPEIWRLA).

As to quaternary structure, part of the SCF (SKP1-CUL1-F-box) E3 ubiquitin-protein ligase complex SCF(FBXO9) composed of CUL1, SKP1, RBX1 and FBXO9. Interacts with TTI1 and TELO2; when TTI1 and TELO2 are phosphorylated by CK2.

It is found in the cytoplasm. It functions in the pathway protein modification; protein ubiquitination. Its function is as follows. Substrate recognition component of a SCF (SKP1-CUL1-F-box protein) E3 ubiquitin-protein ligase complex which mediates the ubiquitination and subsequent proteasomal degradation of target proteins and plays a role in several biological processes such as cell cycle, cell proliferation, or maintenance of chromosome stability. Ubiquitinates mTORC1-bound TTI1 and TELO2 when they are phosphorylated by CK2 following growth factor deprivation, leading to their degradation. In contrast, does not mediate ubiquitination of TTI1 and TELO2 when they are part of the mTORC2 complex. As a consequence, mTORC1 is inactivated to restrain cell growth and protein translation, while mTORC2 is the activated due to the relief of feedback inhibition by mTORC1. Plays a role in maintaining epithelial cell survival by regulating the turn-over of chromatin modulator PRMT4 through ubiquitination and degradation by the proteasomal pathway. Also regulates PPARgamma stability by facilitating PPARgamma/PPARG ubiquitination and thereby plays a role in adipocyte differentiation. The sequence is that of F-box only protein 9 (Fbxo9) from Mus musculus (Mouse).